A 184-amino-acid chain; its full sequence is Large ribosomal subunit protein uL22 (184 aa).

The interval 160-184 (PEEEVAQKKKISQKKLKKQKLMARE) is disordered. The segment covering 167-184 (KKKISQKKLKKQKLMARE) has biased composition (basic residues).

Belongs to the universal ribosomal protein uL22 family. As to quaternary structure, component of the large ribosomal subunit. In terms of tissue distribution, expressed in pancreas, lung, colon, cystic duct, gall bladder, kidney and liver. Expressed at high levels in the well differentiated pancreatic tumor cell lines HPAF, COLO 357 and Capan-1, the moderately differentiated pancreatic tumor cell lines T3M-4, AsPc-1 and BxPc-3, the poorly differentiated pancreatic tumor cell line MIA PaCa-2, and the pancreatic tumor cell lines of undefined differentiation status such as SW979. Expressed at lower levels in the poorly differentiated pancreatic tumor cell lines HCG-25 and PANC-1.

It is found in the cytoplasm. Component of the large ribosomal subunit. The ribosome is a large ribonucleoprotein complex responsible for the synthesis of proteins in the cell. The protein is Large ribosomal subunit protein uL22 (RPL17) of Homo sapiens (Human).